The sequence spans 440 residues: UDP-N-acetylmuramoylalanine--D-glutamate ligase (440 aa).

Residue 113–119 (GTNGKST) coordinates ATP.

This sequence belongs to the MurCDEF family.

It localises to the cytoplasm. It carries out the reaction UDP-N-acetyl-alpha-D-muramoyl-L-alanine + D-glutamate + ATP = UDP-N-acetyl-alpha-D-muramoyl-L-alanyl-D-glutamate + ADP + phosphate + H(+). It participates in cell wall biogenesis; peptidoglycan biosynthesis. Functionally, cell wall formation. Catalyzes the addition of glutamate to the nucleotide precursor UDP-N-acetylmuramoyl-L-alanine (UMA). The chain is UDP-N-acetylmuramoylalanine--D-glutamate ligase from Buchnera aphidicola subsp. Acyrthosiphon pisum (strain Tuc7).